Reading from the N-terminus, the 32-residue chain is Photosystem I reaction center subunit XII (32 aa).

A helical transmembrane segment spans residues 10–27 (VVALISALVTGILALRLG).

This sequence belongs to the PsaM family.

Its subcellular location is the plastid. It localises to the chloroplast thylakoid membrane. This chain is Photosystem I reaction center subunit XII, found in Zygnema circumcarinatum (Green alga).